We begin with the raw amino-acid sequence, 184 residues long: Peptide deformylase 2 (184 aa).

Fe cation contacts are provided by C110 and H153. Residue E154 is part of the active site. Residue H157 coordinates Fe cation.

This sequence belongs to the polypeptide deformylase family. Requires Fe(2+) as cofactor.

It catalyses the reaction N-terminal N-formyl-L-methionyl-[peptide] + H2O = N-terminal L-methionyl-[peptide] + formate. Functionally, removes the formyl group from the N-terminal Met of newly synthesized proteins. Requires at least a dipeptide for an efficient rate of reaction. N-terminal L-methionine is a prerequisite for activity but the enzyme has broad specificity at other positions. The chain is Peptide deformylase 2 from Geobacillus stearothermophilus (Bacillus stearothermophilus).